A 341-amino-acid chain; its full sequence is S-adenosylmethionine:tRNA ribosyltransferase-isomerase (341 aa).

This sequence belongs to the QueA family. Monomer.

It is found in the cytoplasm. It catalyses the reaction 7-aminomethyl-7-carbaguanosine(34) in tRNA + S-adenosyl-L-methionine = epoxyqueuosine(34) in tRNA + adenine + L-methionine + 2 H(+). Its pathway is tRNA modification; tRNA-queuosine biosynthesis. Its function is as follows. Transfers and isomerizes the ribose moiety from AdoMet to the 7-aminomethyl group of 7-deazaguanine (preQ1-tRNA) to give epoxyqueuosine (oQ-tRNA). The protein is S-adenosylmethionine:tRNA ribosyltransferase-isomerase of Thermoanaerobacter sp. (strain X514).